The chain runs to 448 residues: Protein chibby homolog 2 (448 aa).

A phosphoserine mark is found at Ser41, Ser86, Ser89, Ser97, Ser124, Ser144, Ser148, and Ser150. The stretch at 164–198 (KECMLQEENKSLREENKALREENRMLSKENKILQV) forms a coiled coil. Phosphoserine occurs at positions 212 and 225. Positions 242–267 (KEDSTLQLLREENRALQQLLEQKQAY) form a coiled coil. The segment at 270–323 (QAEDTAAPAEESKPAPSPHEEPCSPGLLQDQGSGLSSRFEEPKGPPARQEDSKE) is disordered. Composition is skewed to basic and acidic residues over residues 279 to 291 (EESK…HEEP) and 307 to 323 (RFEE…DSKE). Phosphoserine occurs at positions 335 and 338. The stretch at 356–414 (LQLLREMRQALQALLKENRLLQEENRTLQVLRAEHRGFQEENKALWENNKLKLQQKLVI) forms a coiled coil.

This sequence belongs to the chibby family. SPERT subfamily. As to quaternary structure, homodimer. Binds to NEK1. Testis-specific.

In Homo sapiens (Human), this protein is Protein chibby homolog 2.